The primary structure comprises 644 residues: Kininogen-1 (644 aa).

Residues 1 to 18 (MKLITILFLCSRLLLSLT) form the signal peptide. Pyrrolidone carboxylic acid; in mature form is present on Gln19. Residues 28–132 (CNDKDLFKAV…TQTCQITPAE (105 aa)) enclose the Cystatin kininogen-type 1 domain. Intrachain disulfides connect Cys28–Cys614, Cys83–Cys94, Cys107–Cys126, Cys142–Cys145, Cys206–Cys218, Cys229–Cys248, Cys264–Cys267, Cys328–Cys340, and Cys351–Cys370. An N-linked (GlcNAc...) (complex) asparagine glycan is attached at Asn48. Residues 120-153 (SVATQTCQITPAEGPVVTAQYDCLGCVHPISTQS) are O-glycosylated at one site only. In terms of domain architecture, Cystatin kininogen-type 2 spans 151–254 (TQSPDLEPIL…SQNCDIYPGK (104 aa)). An N-linked (GlcNAc...) asparagine glycan is attached at Asn169. The N-linked (GlcNAc...) (complex) asparagine glycan is linked to Asn205. The 104-residue stretch at 273-376 (TNSPELEETL…TVNCQPLGMI (104 aa)) folds into the Cystatin kininogen-type 3 domain. Asn294 is a glycosylation site (N-linked (GlcNAc...) (complex) asparagine). A Phosphoserine; by FAM20C modification is found at Ser332. Position 383 is a 4-hydroxyproline; partial (Pro383). The interval 387-555 (PFRSSRIGEI…TPIPSLAKPG (169 aa)) is disordered. O-linked (GalNAc...) threonine glycosylation occurs at Thr401. Over residues 418–434 (DSGKEQGHTRRHDWGHE) the composition is skewed to basic and acidic residues. Repeats lie at residues 420–449 (GKEQ…KHER), 450–479 (DQGH…KFKL), and 480–510 (DDDL…KNKG). Positions 435–446 (KQRKHNLGHGHK) are enriched in basic residues. Over residues 477–493 (FKLDDDLEHQGGHVLDH) the composition is skewed to basic and acidic residues. Positions 494–518 (GHKHKHGHGHGKHKNKGKKNGKHNG) are enriched in basic residues. Polar residues predominate over residues 524–539 (LASSSEDSTTPSAQTQ). Thr533, Thr542, Thr546, Thr557, and Thr571 each carry an O-linked (GalNAc...) threonine glycan. O-linked (GalNAc...) serine glycosylation is present at Ser577. Thr628 carries O-linked (GalNAc...) threonine glycosylation.

As to quaternary structure, interacts (high molecular weight kininogen) (via amino acids 402-532) with triafestin-1 and triafestin-2, anticoagulant proteins from Triatoma infestans. Interacts (high molecular weight kininogen) (via amino acids 402-532) with short form salivary protein D7R1, an anticoagulant protein from Anopheles stephensi. Interacts (high molecular weight kininogen) (via amino acids 421-466 and 459-513) with haemaphysalin, an anticoagulant protein from Haemaphysalis longicornis. Post-translationally, bradykinin is inactivated by ACE, which removes the dipeptide Arg-Phe from its C-terminus. In terms of processing, bradykinin is released from kininogen by plasma kallikrein. Hydroxylation of Pro-383 occurs prior to the release of bradykinin. Post-translationally, phosphorylated by FAM20C in the extracellular medium. In terms of processing, N- and O-glycosylated. O-glycosylated with core 1 or possibly core 8 glycans. (Microbial infection) Bradykinin is generated upon proteolytic cleavage by S.pyogenes SpeB to produce hypotension during septic shock. Secreted in plasma. T-kinin is detected in malignant ovarian, colon and breast carcinomas, but not in benign tumors.

It is found in the secreted. It localises to the extracellular space. Kininogens are inhibitors of thiol proteases. HMW-kininogen plays an important role in blood coagulation by helping to position optimally prekallikrein and factor XI next to factor XII; HMW-kininogen inhibits the thrombin- and plasmin-induced aggregation of thrombocytes. LMW-kininogen inhibits the aggregation of thrombocytes. LMW-kininogen is in contrast to HMW-kininogen not involved in blood clotting. In terms of biological role, the active peptide bradykinin is a potent vasodilatator that is released from HMW-kininogen shows a variety of physiological effects: (A) influence in smooth muscle contraction, (B) induction of hypotension, (C) natriuresis and diuresis, (D) decrease in blood glucose level, (E) it is a mediator of inflammation and causes (E1) increase in vascular permeability, (E2) stimulation of nociceptors (4E3) release of other mediators of inflammation (e.g. prostaglandins), (F) it has a cardioprotective effect (directly via bradykinin action, indirectly via endothelium-derived relaxing factor action). The protein is Kininogen-1 (KNG1) of Homo sapiens (Human).